We begin with the raw amino-acid sequence, 258 residues long: Undecaprenyl-diphosphatase (258 aa).

8 helical membrane-spanning segments follow: residues 14-34 (AAGE…PWLL), 39-59 (QGLT…LIYF), 79-99 (GKIL…GVLF), 106-126 (VFRS…ILHL), 136-156 (VALN…ALMP), 176-196 (AESA…AAVL), 209-229 (AFIA…KFLM), and 237-257 (FNIF…TALM).

The protein belongs to the UppP family.

It is found in the cell membrane. The catalysed reaction is di-trans,octa-cis-undecaprenyl diphosphate + H2O = di-trans,octa-cis-undecaprenyl phosphate + phosphate + H(+). Its function is as follows. Catalyzes the dephosphorylation of undecaprenyl diphosphate (UPP). Confers resistance to bacitracin. In Elusimicrobium minutum (strain Pei191), this protein is Undecaprenyl-diphosphatase.